Here is a 360-residue protein sequence, read N- to C-terminus: uncharacterized protein (360 aa).

A THUMP domain is found at 45–148 (EDIEDKILQI…KNKTYVSITP (104 aa)).

This is an uncharacterized protein from Methanocaldococcus jannaschii (strain ATCC 43067 / DSM 2661 / JAL-1 / JCM 10045 / NBRC 100440) (Methanococcus jannaschii).